We begin with the raw amino-acid sequence, 306 residues long: Bifunctional protein FolD (306 aa).

NADP(+)-binding positions include 164 to 166 (GRS), serine 189, and threonine 230.

It belongs to the tetrahydrofolate dehydrogenase/cyclohydrolase family. Homodimer.

It catalyses the reaction (6R)-5,10-methylene-5,6,7,8-tetrahydrofolate + NADP(+) = (6R)-5,10-methenyltetrahydrofolate + NADPH. It carries out the reaction (6R)-5,10-methenyltetrahydrofolate + H2O = (6R)-10-formyltetrahydrofolate + H(+). It participates in one-carbon metabolism; tetrahydrofolate interconversion. Its function is as follows. Catalyzes the oxidation of 5,10-methylenetetrahydrofolate to 5,10-methenyltetrahydrofolate and then the hydrolysis of 5,10-methenyltetrahydrofolate to 10-formyltetrahydrofolate. This chain is Bifunctional protein FolD, found in Solibacter usitatus (strain Ellin6076).